Here is an 858-residue protein sequence, read N- to C-terminus: Low-density lipoprotein receptor-related protein 12 (858 aa).

A signal peptide spans 1–32; that stretch reads MARRWSTKESQRRGSAWLLLFLAGVYGNGALA. The Extracellular segment spans residues 33-492; that stretch reads ELSENVHISG…ENCPVIVPTR (460 aa). 9 disulfides stabilise this stretch: Cys47–Cys76, Cys103–Cys122, Cys166–Cys178, Cys173–Cys191, Cys185–Cys200, Cys215–Cys232, Cys222–Cys245, Cys239–Cys254, and Cys259–Cys285. Residues 47–159 form the CUB 1 domain; it reads CGESPEQIRA…KGFRLAYFSG (113 aa). Asn75 carries N-linked (GlcNAc...) asparagine glycosylation. LDL-receptor class A domains lie at 165-201 and 214-255; these read DCAC…EVCA and PCAY…IDCD. The 114-residue stretch at 259-372 folds into the CUB 2 domain; it reads CGQWLKYFYG…RGFNATYQVD (114 aa). Asn284 and Asn366 each carry an N-linked (GlcNAc...) asparagine glycan. LDL-receptor class A domains are found at residues 374–411, 412–449, and 450–486; these read FCLP…INCT, MCQK…KNCF, and FCQP…ENCP. 9 disulfides stabilise this stretch: Cys375–Cys388, Cys382–Cys401, Cys395–Cys410, Cys413–Cys426, Cys420–Cys439, Cys433–Cys448, Cys451–Cys463, Cys458–Cys476, and Cys470–Cys485. Residue Asn409 is glycosylated (N-linked (GlcNAc...) asparagine). Asn441 carries an N-linked (GlcNAc...) asparagine glycan. The helical transmembrane segment at 493-513 threads the bilayer; that stretch reads VITAAVIGSLICGLLLVIALG. Topologically, residues 514–858 are cytoplasmic; it reads CTCKLYSLRM…TSDDEALLLC (345 aa). 2 disordered regions span residues 619-721 and 746-767; these read ALVS…VSPA and SSST…SGRE. A compositionally biased stretch (low complexity) spans 712–721; that stretch reads SVEAPSVSPA. Polar residues predominate over residues 746–755; sequence SSSTTQNRSP.

It belongs to the LDLR family. May interact with RACK1, ZFYVE9 and NMRK2.

It is found in the membrane. It localises to the coated pit. Its function is as follows. Probable receptor, which may be involved in the internalization of lipophilic molecules and/or signal transduction. May act as a tumor suppressor. This chain is Low-density lipoprotein receptor-related protein 12 (Lrp12), found in Mus musculus (Mouse).